A 356-amino-acid chain; its full sequence is Protein SEC13 homolog (356 aa).

WD repeat units follow at residues 11–50 (EHEDMVHHAALDFYGLLLATCSSDGSVRIFHSRKNNKALA), 54–95 (GHQG…DWTK), 101–142 (NHDS…GVWD), 149–205 (AHTI…WVEE), 210–253 (AHSD…SEWT), and 259–298 (TFDDAVWSISWSTTGNILAVTGGDNNVTLWKENTEGQWIR). Residues 307–356 (IQSKQPSHLPHSHSQQQQALQQHQQQAPSHPGPSSDSEHSSNLSNSQLSN) form a disordered region. Positions 308-356 (QSKQPSHLPHSHSQQQQALQQHQQQAPSHPGPSSDSEHSSNLSNSQLSN) are enriched in low complexity.

Belongs to the WD repeat SEC13 family. Probable component of the nuclear pore complex (NPC). Component of the GATOR complex consisting of mio, Nup44A/Seh1, Im11, Nplr3, Nplr2, Wdr24, Wdr59 and Sec13. Within the GATOR complex, probable component of the GATOR2 subcomplex which is likely composed of mio, Nup44A/Seh1, Wdr24, Wdr59 and Sec13. Interacts with msk. Interacts (preferentially when phosphorylated) with Mad. The GATOR2 complex associates with unmet in the absence of S-adenosyl-L-methionine; the mio-Wdr24-Nup44A subcomplex is essential and sufficient for this interaction while Wdr59 and Sec13 are dispensable. This association acts as a nutrient sensor to inhibit mTORC1 signaling in the absence of methionine. In terms of tissue distribution, salivary glands.

It localises to the nucleus envelope. Its subcellular location is the nucleus. It is found in the nucleoplasm. The protein resides in the cytoplasm. The protein localises to the cytoskeleton. It localises to the microtubule organizing center. Its subcellular location is the centrosome. It is found in the nuclear pore complex. The protein resides in the cytoplasmic vesicle. The protein localises to the COPII-coated vesicle membrane. It localises to the endoplasmic reticulum membrane. Its subcellular location is the lysosome membrane. Functions as a component of the nuclear pore complex (NPC) and the COPII coat. At the endoplasmic reticulum, SEC13 is involved in the biogenesis of COPII-coated vesicles. Recruited to transcriptionally active chromatin at the time of transcription initiation by RNA polymerase II. Required for proper expression of ecdysone-responsive genes such as Eip74EF and Eip75B during larval development. Required for reactivation of transcription after heat shock. Required for nuclear import of phosphorylated Mad via importin msk. Has no role in classical nuclear localization signal (cNLS)-dependent nuclear import via importin-beta. Functionally, a component of the GATOR subcomplex GATOR2 which functions as an activator of the amino acid-sensing branch of the mTORC1 signaling pathway. The two GATOR subcomplexes, GATOR1 and GATOR2, regulate the mTORC1 pathway in order to mediate metabolic homeostasis, female gametogenesis and the response to amino acid limitation and complete starvation. GATOR2 activates the mTORC1 signaling pathway through the inhibition of the GATOR1 subcomplex, controlling the switch to cell proliferation and growth under nutrient replete conditions and during female oocyte development. This is Protein SEC13 homolog from Drosophila melanogaster (Fruit fly).